Consider the following 626-residue polypeptide: Phosphoenolpyruvate carboxykinase (ATP) 2 (626 aa).

Disordered stretches follow at residues 1–23 (MASP…APVN) and 64–86 (PNLV…KHQQ). An ATP-binding site is contributed by 324–331 (GLSGTGKT).

Belongs to the phosphoenolpyruvate carboxykinase (ATP) family. As to quaternary structure, homohexamer.

The protein localises to the cytoplasm. It carries out the reaction oxaloacetate + ATP = phosphoenolpyruvate + ADP + CO2. Its pathway is carbohydrate biosynthesis; gluconeogenesis. The sequence is that of Phosphoenolpyruvate carboxykinase (ATP) 2 (PCK2) from Urochloa panicoides (Panic liverseed grass).